A 482-amino-acid chain; its full sequence is Spore germination protein A1 (482 aa).

6 consecutive transmembrane segments (helical) span residues 242–262 (VAIL…LGIL), 284–304 (FASI…VSFH), 321–341 (ENVP…IELL), 351–371 (PLGQ…AVEA), 373–393 (LVSS…FTVP), and 406–426 (FISM…FMLV).

Belongs to the GerABKA family.

It is found in the cell membrane. In terms of biological role, forms a complex at the inner spore membrane which acts as a receptor for L-alanine, thus is involved in the stimulation of germination in response to alanine. Can stimulate germination in the absence of GerD and GerK gene products (fructose and glucose receptors, respectively), but the response is improved in their presence. The protein is Spore germination protein A1 (gerAA) of Bacillus subtilis (strain 168).